Reading from the N-terminus, the 1052-residue chain is MSMNKFFQPKNALKRAEDLEAVGKPNLALETLHDLLNSSKHKKQWTAVHEEIMIKFLDLCMQLKRAPEAKDGLYQFKIVTGTSAVNSLEKVVRYYLKTAEDKVAEAWQQSQLRDATNVNDEIDDLEEAQTPEQVLLAAVSADGETERANRVQLMPWLRYLWEAYRAVLELLRHHSKMEHAYHATARQAMRFCHQYERRNEFRRLCNMLSLHLNQWRTPYQSKSGQAGIDINNPQTIQYSLDTRFELISYAGKLEQWQEAFRAMEEVTGLLDSAPEKPSPPVWGIYYHKLAQIFWRSKDYAFHAAAWHQMFDNAIRNAKSFNRDDIQYAASAVLLASLTVPLANLDTMVKPMEGYLPEVRASRQQRLAGLLGLSRMPSRDELLQYMFDLNVMTYVHPALKDLYNLVEDEFDPLQLSQKAAPVLEFLKSHEQFAQYVTPLKYILLLRLLKQLSQLYSSLKLERCFKLASFMTPEECEEVLVHAVQDKVLQLRIDHARGSLHFNNNIFAFNERQVNDGPKLQNLQAEMMNGQLTTLSRRLYTAINMIKPAVVQESQMGVKAINRIKDEVAREHVSNLSRRDEIEKQKEELEQSRRRRHQEQMQKHHQNQMQVRQKMAEAVKKNQEELERQKLQLQREEIERQKALEALNDVSSSSAGQKVVQALNKSDLGTKITAQDIHKMAYEQQKKDARERQERLRAEEKRLDHMERAKRLREIPRRKEHIAAMSEQNAKWHTELQSARLEKARVDHAKALGLKELLKAFAPDKDAYIEEKTAERRKEYMAKLDDFKQRMQEQKIRLEREERERKREEKRRAEEEEQRRIKQEEEDRKQREREAKREQERQEQLKLEEAERKKMEEATKLQRQREEQVRAREQEKLSNLSAQTSQPTWKRSARSDAPTTAAPSSMRVSSWKGDASDDSGRSQPFRPSRGGERDSGRSFSGLGDRGDRAPRDTGRSFSGLGDRGDRAPRDTGRSFSGLGDRAPRDFSGRSEPSRSGPRDFSGRSEAGRTSGERRALHVPSGGADKPSGDNVWRSSRGAGSERRVNIPSRGDDKN.

The 181-residue stretch at isoleucine 325–phenylalanine 505 folds into the PCI domain. Coiled coils occupy residues arginine 568–glutamate 712 and glutamate 769–threonine 882. 2 stretches are compositionally biased toward basic and acidic residues: residues histidine 570–glutamine 600 and lysine 793–lysine 874. Disordered regions lie at residues histidine 570–glutamine 606 and lysine 793–asparagine 1052. 2 stretches are compositionally biased toward polar residues: residues leucine 875–tryptophan 887 and alanine 895–valine 906. Basic and acidic residues-rich tracts occupy residues aspartate 942–glycine 952, aspartate 960–glycine 970, arginine 979–alanine 1013, and glycine 1037–asparagine 1052.

It belongs to the eIF-3 subunit A family. Component of the eukaryotic translation initiation factor 3 (eIF-3) complex.

The protein localises to the cytoplasm. Its function is as follows. RNA-binding component of the eukaryotic translation initiation factor 3 (eIF-3) complex, which is involved in protein synthesis of a specialized repertoire of mRNAs and, together with other initiation factors, stimulates binding of mRNA and methionyl-tRNAi to the 40S ribosome. The eIF-3 complex specifically targets and initiates translation of a subset of mRNAs involved in cell proliferation. The polypeptide is Eukaryotic translation initiation factor 3 subunit A (Monosiga brevicollis (Choanoflagellate)).